The following is a 250-amino-acid chain: Cell division protein ZapD (250 aa).

It belongs to the ZapD family. In terms of assembly, interacts with FtsZ.

Its subcellular location is the cytoplasm. In terms of biological role, cell division factor that enhances FtsZ-ring assembly. Directly interacts with FtsZ and promotes bundling of FtsZ protofilaments, with a reduction in FtsZ GTPase activity. The sequence is that of Cell division protein ZapD from Yersinia pseudotuberculosis serotype O:1b (strain IP 31758).